Here is a 252-residue protein sequence, read N- to C-terminus: 3-dehydroquinate dehydratase (252 aa).

3-dehydroquinate-binding positions include 47–49 (EWR) and R83. H144 serves as the catalytic Proton donor/acceptor. K171 acts as the Schiff-base intermediate with substrate in catalysis. The 3-dehydroquinate site is built by R213, S232, and Q236.

Belongs to the type-I 3-dehydroquinase family. As to quaternary structure, homodimer.

The enzyme catalyses 3-dehydroquinate = 3-dehydroshikimate + H2O. Its pathway is metabolic intermediate biosynthesis; chorismate biosynthesis; chorismate from D-erythrose 4-phosphate and phosphoenolpyruvate: step 3/7. Its function is as follows. Involved in the third step of the chorismate pathway, which leads to the biosynthesis of aromatic amino acids. Catalyzes the cis-dehydration of 3-dehydroquinate (DHQ) and introduces the first double bond of the aromatic ring to yield 3-dehydroshikimate. In Lactiplantibacillus plantarum (strain ATCC BAA-793 / NCIMB 8826 / WCFS1) (Lactobacillus plantarum), this protein is 3-dehydroquinate dehydratase.